A 105-amino-acid chain; its full sequence is ESAT-6-like protein EsxU (105 aa).

It belongs to the WXG100 family. CFP-10 subfamily. In terms of assembly, forms a tight 1:1 complex with EsxT. Complex formation results in induction of alpha-helical conformation and stability against chemical denaturation.

The protein resides in the secreted. The polypeptide is ESAT-6-like protein EsxU (Mycobacterium tuberculosis (strain ATCC 25618 / H37Rv)).